The chain runs to 414 residues: Serine hydroxymethyltransferase (414 aa).

Residues Leu117 and 121–123 (GHL) each bind (6S)-5,6,7,8-tetrahydrofolate. Lys226 carries the post-translational modification N6-(pyridoxal phosphate)lysine.

It belongs to the SHMT family. Homodimer. Requires pyridoxal 5'-phosphate as cofactor.

It localises to the cytoplasm. The enzyme catalyses (6R)-5,10-methylene-5,6,7,8-tetrahydrofolate + glycine + H2O = (6S)-5,6,7,8-tetrahydrofolate + L-serine. The protein operates within one-carbon metabolism; tetrahydrofolate interconversion. It functions in the pathway amino-acid biosynthesis; glycine biosynthesis; glycine from L-serine: step 1/1. Its function is as follows. Catalyzes the reversible interconversion of serine and glycine with tetrahydrofolate (THF) serving as the one-carbon carrier. This reaction serves as the major source of one-carbon groups required for the biosynthesis of purines, thymidylate, methionine, and other important biomolecules. Also exhibits THF-independent aldolase activity toward beta-hydroxyamino acids, producing glycine and aldehydes, via a retro-aldol mechanism. This chain is Serine hydroxymethyltransferase, found in Dictyoglomus turgidum (strain DSM 6724 / Z-1310).